Here is a 328-residue protein sequence, read N- to C-terminus: Tryptophan--tRNA ligase (328 aa).

Residues 10 to 12 (QAT) and 18 to 19 (GN) each bind ATP. Residues 11-19 (ATGSLHLGN) carry the 'HIGH' region motif. Aspartate 134 contacts L-tryptophan. ATP-binding positions include 146-148 (GED), isoleucine 186, and 195-199 (KMSKS). The 'KMSKS' region motif lies at 195–199 (KMSKS).

It belongs to the class-I aminoacyl-tRNA synthetase family. In terms of assembly, homodimer.

Its subcellular location is the cytoplasm. It catalyses the reaction tRNA(Trp) + L-tryptophan + ATP = L-tryptophyl-tRNA(Trp) + AMP + diphosphate + H(+). Its function is as follows. Catalyzes the attachment of tryptophan to tRNA(Trp). This is Tryptophan--tRNA ligase from Rickettsia bellii (strain RML369-C).